A 36-amino-acid chain; its full sequence is Phospholipase A2 hemilipin-2 (36 aa).

It belongs to the phospholipase A2 family. Group III subfamily. As to quaternary structure, heterodimer composed of a small subunit and a large subunit; disulfid-linked. It depends on Ca(2+) as a cofactor. Expressed by the venom gland.

Its subcellular location is the secreted. The enzyme catalyses a 1,2-diacyl-sn-glycero-3-phosphocholine + H2O = a 1-acyl-sn-glycero-3-phosphocholine + a fatty acid + H(+). In terms of biological role, scorpion venom phospholipase A2 (PLA2) that impacts angiogenesis in vitro and in vivo without showing any cytotoxic or apoptotic signs. The antiangiogenic effect is independent from the catalytic activity and seems to be held by its small subunit. PLA2 catalyzes the calcium-dependent hydrolysis of the 2-acyl groups in 3-sn-phosphoglycerides. The chain is Phospholipase A2 hemilipin-2 from Hemiscorpius lepturus (Scorpion).